We begin with the raw amino-acid sequence, 342 residues long: MATLTETITSLAQPFVHLEDTINSPPVKETIRPRNDTTITPPPTQWSYLCHPRVKEVQDEVDGYFLENWKFPSFKAVRTFLGAKFSEVTCLYFPLALDDRIHFACRLLTVLFLIDDVLEHMSFADGEAYNNRLIPISRGDVLPDRTKPEEFILYDLWESMRAHDAELANEVLEPTFVFMRAQTDRARLTIHELGHYLEYREKDVGKALLSALMRFSMGLRFSADELQGMKALEANCAKQLSVVNDIYSYDKEEEASRTGHKEGAFLCSAVKVLAEESKLGIPATKRVLWSMTREWETVHDEIVAEKIASPDGCSEAAKAYMKGLEYQMSGNEQWSKTTRRYN.

Mg(2+) is bound by residues aspartate 115, asparagine 244, serine 248, and glutamate 252. Positions 340 and 341 each coordinate (2E,6E)-farnesyl diphosphate.

Belongs to the terpene synthase family. As to quaternary structure, homodimer. Requires Mg(2+) as cofactor.

It catalyses the reaction (2E,6E)-farnesyl diphosphate = (+)-aristolochene + diphosphate. The protein operates within sesquiterpene biosynthesis; aristolochene biosynthesis; aristolochene from farnesyl diphosphate: step 1/1. In terms of biological role, aristolochene synthase; part of the gene cluster that mediates the biosynthesis of PR-toxin, a bicyclic sesquiterpene belonging to the eremophilane class and acting as a mycotoxin. The first step of the pathway is catalyzed by the aristolochene synthase which performs the cyclization of trans,trans-farnesyl diphosphate (FPP) to the bicyclic sesquiterpene aristolochene. Following the formation of aristolochene, the non-oxygenated aristolochene is converted to the trioxygenated intermediate eremofortin B, via 7-epi-neopetasone. This conversion appears to involve three enzymes, a hydroxysterol oxidase-like enzyme, the quinone-oxidase prx3 that forms the quinone-type-structure in the bicyclic nucleus of aristolochene with the C8-oxo group and the C-3 hydroxyl group, and the P450 monooxygenase prx9 that introduces the epoxide at the double bond between carbons 1 and 2. No monoxy or dioxy-intermediates have been reported to be released to the broth, so these three early oxidative reactions may be coupled together. Eremofortin B is further oxidized by another P450 monooxygenase, that introduces a second epoxide between carbons 7 and 11 prior to acetylation to eremofortin A by the acetyltransferase prx11. The second epoxidation may be performed by a second P450 monooxygenase. After the acetylation step, the conversion of eremofortin A to eremofortin C and then to PR-toxin requires only two enzymes. First the conversion of eremofortin A to eremofortin C proceeds by oxidation of the side chain of the molecule at C-12 and is catalyzed by the short-chain oxidoreductase prx1. The cytochrome P450 monooxygenase prx8 also plays a role in this step. The primary alcohol formed at C-12 is finally oxidized by the short-chain alcohol dehydrogenase prx4 that forms PR-toxin. The polypeptide is Aristolochene synthase prx2 (Penicillium rubens (strain ATCC 28089 / DSM 1075 / NRRL 1951 / Wisconsin 54-1255) (Penicillium chrysogenum)).